A 66-amino-acid polypeptide reads, in one-letter code: Large ribosomal subunit protein bL35 (66 aa).

Basic residues-rich tracts occupy residues 1–16 (MPKQ…RVKR) and 23–45 (KRGR…RQLR). The segment at 1–53 (MPKQKTHRGLAKRVKRTGGGGLKRGRAFTSHRFHGKTKKQRRQLRKASMVAKG) is disordered.

This sequence belongs to the bacterial ribosomal protein bL35 family.

The chain is Large ribosomal subunit protein bL35 from Enterococcus faecalis (strain ATCC 700802 / V583).